Consider the following 255-residue polypeptide: tRNA (guanine-N(1)-)-methyltransferase (255 aa).

S-adenosyl-L-methionine contacts are provided by residues G112 and 131 to 136 (LGDYVL).

This sequence belongs to the RNA methyltransferase TrmD family. As to quaternary structure, homodimer.

The protein resides in the cytoplasm. It carries out the reaction guanosine(37) in tRNA + S-adenosyl-L-methionine = N(1)-methylguanosine(37) in tRNA + S-adenosyl-L-homocysteine + H(+). Specifically methylates guanosine-37 in various tRNAs. The polypeptide is tRNA (guanine-N(1)-)-methyltransferase (Lacticaseibacillus paracasei (strain ATCC 334 / BCRC 17002 / CCUG 31169 / CIP 107868 / KCTC 3260 / NRRL B-441) (Lactobacillus paracasei)).